Consider the following 214-residue polypeptide: Large ribosomal subunit protein uL3 (214 aa).

The disordered stretch occupies residues 129-155; sequence FGRGPMSHGSKNHRRPGSVGAGTTPGR.

The protein belongs to the universal ribosomal protein uL3 family. Part of the 50S ribosomal subunit. Forms a cluster with proteins L14 and L19.

Functionally, one of the primary rRNA binding proteins, it binds directly near the 3'-end of the 23S rRNA, where it nucleates assembly of the 50S subunit. The sequence is that of Large ribosomal subunit protein uL3 from Synechococcus sp. (strain JA-3-3Ab) (Cyanobacteria bacterium Yellowstone A-Prime).